The following is a 72-amino-acid chain: Protein SlyX (72 aa).

Residues 53–72 (KSSQSSMLARPEDETPPPHY) form a disordered region.

This sequence belongs to the SlyX family.

This is Protein SlyX from Proteus mirabilis (strain HI4320).